Here is an 89-residue protein sequence, read N- to C-terminus: Co-chaperonin GroES (89 aa).

It belongs to the GroES chaperonin family. As to quaternary structure, heptamer of 7 subunits arranged in a ring. Interacts with the chaperonin GroEL.

Its subcellular location is the cytoplasm. Functionally, together with the chaperonin GroEL, plays an essential role in assisting protein folding. The GroEL-GroES system forms a nano-cage that allows encapsulation of the non-native substrate proteins and provides a physical environment optimized to promote and accelerate protein folding. GroES binds to the apical surface of the GroEL ring, thereby capping the opening of the GroEL channel. The sequence is that of Co-chaperonin GroES from Petrotoga mobilis (strain DSM 10674 / SJ95).